We begin with the raw amino-acid sequence, 373 residues long: Nodulation protein NolL (373 aa).

9 consecutive transmembrane segments (helical) span residues 27–47 (DFAKGILITLVIIGHLLQYLI), 62–82 (SIYMFHMPLFMAISGYLSSGA), 98–118 (QLLLPMLFWCTLIWTLKSAVI), 140–160 (WFIWAAFISFILIRVLTTFNR), 164–184 (WIISASAIAVAFAPITLSITP), 212–232 (RYKWIFVVLLSIAAFICFLGW), 253–273 (QVFLMFSGSLAASAVAMQSMF), 286–306 (RFVAVQLGQSTLLLYLVQGAV), and 324–344 (RITFATVLGVAIVVIAMAIRS).

Belongs to the acyltransferase 3 family.

The protein localises to the cell membrane. Its function is as follows. Thought to be an acetyltransferase that modifies the fucose of the nod factor. The chain is Nodulation protein NolL (nolL) from Mesorhizobium japonicum (strain LMG 29417 / CECT 9101 / MAFF 303099) (Mesorhizobium loti (strain MAFF 303099)).